Here is a 299-residue protein sequence, read N- to C-terminus: MRLHEVSGATETVEAAPAKINLALHVTGQRADGYHLLETLVTFTAAGDMIRIRDAATDSFSISGPFGDLLSAGDSGDNLVTRARDILRDALASTGQPARPVDIHLEKNLPVASGIGGGSADAAATLRGLLRHWDAAIAPEKLKSLALKLGADVPMCLASRPLIARGIGEDIEALTDLPELSMVLANPLKAVSTPEIFRRLQNKVNPHLPTPSTIGWATTGWMDFLAQSRNDLQPPAQALLPEIGEITGLLSEEGATLVRMSGSGATCFGIFHSFDAAKNAETSLRKKRPGWYFHATRTI.

Residue Lys-19 is part of the active site. Position 110–120 (110–120 (PVASGIGGGSA)) interacts with ATP. Asp-152 is a catalytic residue.

This sequence belongs to the GHMP kinase family. IspE subfamily.

The enzyme catalyses 4-CDP-2-C-methyl-D-erythritol + ATP = 4-CDP-2-C-methyl-D-erythritol 2-phosphate + ADP + H(+). Its pathway is isoprenoid biosynthesis; isopentenyl diphosphate biosynthesis via DXP pathway; isopentenyl diphosphate from 1-deoxy-D-xylulose 5-phosphate: step 3/6. Catalyzes the phosphorylation of the position 2 hydroxy group of 4-diphosphocytidyl-2C-methyl-D-erythritol. This is 4-diphosphocytidyl-2-C-methyl-D-erythritol kinase from Agrobacterium fabrum (strain C58 / ATCC 33970) (Agrobacterium tumefaciens (strain C58)).